We begin with the raw amino-acid sequence, 195 residues long: uncharacterized protein (195 aa).

2 helical membrane passes run 13-32 and 42-64; these read VIGL…FLVA and LSNS…TILV.

Its subcellular location is the cell membrane. This is an uncharacterized protein from Archaeoglobus fulgidus (strain ATCC 49558 / DSM 4304 / JCM 9628 / NBRC 100126 / VC-16).